Here is a 319-residue protein sequence, read N- to C-terminus: MTTEDVIAIRVPTPFAVGDVIVYLVKGDALTLIDAGPNTKEAARALQEQLAAVNVKLSDIEQVVLTHHHADHAGLLDVFSDEIEVIGHTFNEPYISQNQAFMDWQKRFFQKLLPELGVPFDTGKAEKLIRSAYAFSCTRSLTKSIREGMGIDGLEGWSVLEMPGHAESHIVLFHEKSGRMLGGDLLLANSSSNPILEAPKAGDVRSKPLVDYQRSLRRLSQLDPTIVFPGHGEPITSVQALIEKRFDKQRNRTEDVRRMLDEKPMTAFQVCQQLFPAVYEKELFLTMSETAGHLDVLEAEEAITSYWEGNTVYFKTMKR.

Zn(2+) is bound by residues histidine 67, histidine 69, aspartate 71, histidine 72, histidine 165, aspartate 184, and histidine 231.

Belongs to the metallo-beta-lactamase superfamily. Zn(2+) serves as cofactor.

In Bacillus subtilis (strain 168), this protein is Probable metallo-hydrolase YqjP (yqjP).